Here is a 285-residue protein sequence, read N- to C-terminus: Pantothenate synthetase (285 aa).

Met-30–His-37 contacts ATP. The active-site Proton donor is the His-37. Gln-61 contributes to the (R)-pantoate binding site. Gln-61 contacts beta-alanine. Gly-147–Asp-150 provides a ligand contact to ATP. Residue Gln-153 participates in (R)-pantoate binding. ATP contacts are provided by residues Val-176 and Lys-184–Arg-187.

This sequence belongs to the pantothenate synthetase family. In terms of assembly, homodimer.

It localises to the cytoplasm. It carries out the reaction (R)-pantoate + beta-alanine + ATP = (R)-pantothenate + AMP + diphosphate + H(+). Its pathway is cofactor biosynthesis; (R)-pantothenate biosynthesis; (R)-pantothenate from (R)-pantoate and beta-alanine: step 1/1. Its function is as follows. Catalyzes the condensation of pantoate with beta-alanine in an ATP-dependent reaction via a pantoyl-adenylate intermediate. This chain is Pantothenate synthetase, found in Listeria monocytogenes serotype 4b (strain F2365).